We begin with the raw amino-acid sequence, 380 residues long: 2-aminoethylphosphonate--pyruvate transaminase (380 aa).

Lys204 is modified (N6-(pyridoxal phosphate)lysine).

It belongs to the class-V pyridoxal-phosphate-dependent aminotransferase family. PhnW subfamily. In terms of assembly, homodimer. Pyridoxal 5'-phosphate serves as cofactor.

It catalyses the reaction (2-aminoethyl)phosphonate + pyruvate = phosphonoacetaldehyde + L-alanine. Functionally, involved in phosphonate degradation. The polypeptide is 2-aminoethylphosphonate--pyruvate transaminase (Aeromonas hydrophila subsp. hydrophila (strain ATCC 7966 / DSM 30187 / BCRC 13018 / CCUG 14551 / JCM 1027 / KCTC 2358 / NCIMB 9240 / NCTC 8049)).